Reading from the N-terminus, the 279-residue chain is Thymidylate synthase (279 aa).

132–133 contacts dUMP; that stretch reads RR. The Nucleophile role is filled by cysteine 153. Residues 178–181, asparagine 189, and 219–221 contribute to the dUMP site; these read RSND and HIY. Aspartate 181 is a binding site for (6R)-5,10-methylene-5,6,7,8-tetrahydrofolate. Position 278 (alanine 278) interacts with (6R)-5,10-methylene-5,6,7,8-tetrahydrofolate.

Belongs to the thymidylate synthase family. Bacterial-type ThyA subfamily. As to quaternary structure, homodimer.

The protein localises to the cytoplasm. It carries out the reaction dUMP + (6R)-5,10-methylene-5,6,7,8-tetrahydrofolate = 7,8-dihydrofolate + dTMP. The protein operates within pyrimidine metabolism; dTTP biosynthesis. Its function is as follows. Catalyzes the reductive methylation of 2'-deoxyuridine-5'-monophosphate (dUMP) to 2'-deoxythymidine-5'-monophosphate (dTMP) while utilizing 5,10-methylenetetrahydrofolate (mTHF) as the methyl donor and reductant in the reaction, yielding dihydrofolate (DHF) as a by-product. This enzymatic reaction provides an intracellular de novo source of dTMP, an essential precursor for DNA biosynthesis. This chain is Thymidylate synthase, found in Lactococcus lactis subsp. lactis (strain IL1403) (Streptococcus lactis).